We begin with the raw amino-acid sequence, 359 residues long: tRNA N6-adenosine threonylcarbamoyltransferase (359 aa).

Positions 115 and 119 each coordinate Fe cation. Substrate contacts are provided by residues 137–141 (LVSGG), D170, G183, and N283. Fe cation is bound at residue D311. A disordered region spans residues 328-359 (APDSLDIAPRSRWPLDEKSAPVFGTGRRGAKA).

It belongs to the KAE1 / TsaD family. It depends on Fe(2+) as a cofactor.

The protein localises to the cytoplasm. The catalysed reaction is L-threonylcarbamoyladenylate + adenosine(37) in tRNA = N(6)-L-threonylcarbamoyladenosine(37) in tRNA + AMP + H(+). Its function is as follows. Required for the formation of a threonylcarbamoyl group on adenosine at position 37 (t(6)A37) in tRNAs that read codons beginning with adenine. Is involved in the transfer of the threonylcarbamoyl moiety of threonylcarbamoyl-AMP (TC-AMP) to the N6 group of A37, together with TsaE and TsaB. TsaD likely plays a direct catalytic role in this reaction. In Brucella canis (strain ATCC 23365 / NCTC 10854 / RM-666), this protein is tRNA N6-adenosine threonylcarbamoyltransferase.